A 333-amino-acid chain; its full sequence is Ketol-acid reductoisomerase (NADP(+)) (333 aa).

Positions 1–171 (MSNDTQPKIA…GGARANIIKT (171 aa)) constitute a KARI N-terminal Rossmann domain. Residues 14–17 (YGSQ), arginine 37, threonine 42, and 72–75 (DMVQ) each bind NADP(+). Histidine 97 is a catalytic residue. Position 123 (glycine 123) interacts with NADP(+). The 146-residue stretch at 172-317 (TFKEETETDL…KKLRAKMVWL (146 aa)) folds into the KARI C-terminal knotted domain. Mg(2+) contacts are provided by aspartate 180, glutamate 184, glutamate 216, and glutamate 220. Substrate is bound at residue serine 241.

Belongs to the ketol-acid reductoisomerase family. It depends on Mg(2+) as a cofactor.

It catalyses the reaction (2R)-2,3-dihydroxy-3-methylbutanoate + NADP(+) = (2S)-2-acetolactate + NADPH + H(+). The enzyme catalyses (2R,3R)-2,3-dihydroxy-3-methylpentanoate + NADP(+) = (S)-2-ethyl-2-hydroxy-3-oxobutanoate + NADPH + H(+). It functions in the pathway amino-acid biosynthesis; L-isoleucine biosynthesis; L-isoleucine from 2-oxobutanoate: step 2/4. Its pathway is amino-acid biosynthesis; L-valine biosynthesis; L-valine from pyruvate: step 2/4. In terms of biological role, involved in the biosynthesis of branched-chain amino acids (BCAA). Catalyzes an alkyl-migration followed by a ketol-acid reduction of (S)-2-acetolactate (S2AL) to yield (R)-2,3-dihydroxy-isovalerate. In the isomerase reaction, S2AL is rearranged via a Mg-dependent methyl migration to produce 3-hydroxy-3-methyl-2-ketobutyrate (HMKB). In the reductase reaction, this 2-ketoacid undergoes a metal-dependent reduction by NADPH to yield (R)-2,3-dihydroxy-isovalerate. This Xanthomonas oryzae pv. oryzae (strain MAFF 311018) protein is Ketol-acid reductoisomerase (NADP(+)).